The chain runs to 355 residues: Neurogenic differentiation factor 1 (355 aa).

A disordered region spans residues 1–93; the sequence is MTKSYSESGL…GPKKKKMTKA (93 aa). Over residues 58–77 the composition is skewed to acidic residues; the sequence is DEEDEDEDLEEEDEEEEEDD. Over residues 80 to 92 the composition is skewed to basic residues; that stretch reads PKRRGPKKKKMTK. Residues 86-92 carry the Nuclear localization signal motif; sequence KKKKMTK. Residues 100 to 152 form the bHLH domain; sequence LRRMKANARERNRMHGLNAALDNLRKVVPCYSKTQKLSKIETLRLAKNYIWAL. A phosphoserine mark is found at S161, S258, S265, and S273. Phosphoserine; by CaMK2 is present on S334.

Efficient DNA-binding requires dimerization with another bHLH protein. Heterodimer with TCF3/E47; the heterodimer is inhibited in presence of ID2, but not NR0B2, to E-box element. Interacts with EP300; the interaction is inhibited by NR0B2. Interacts with RREB1. Interacts with ATOH8. Post-translationally, phosphorylated. In islet cells, phosphorylated on Ser-273 upon glucose stimulation; which may be required for nuclear localization. In activated neurons, phosphorylated on Ser-334; which promotes dendritic growth. Phosphorylated by MAPK1; phosphorylation regulates heterodimerization and DNA-binding activities. Phosphorylation on Ser-265 and Ser-273 increases transactivation on the insulin promoter in glucose-stimulated insulinoma cells. In terms of tissue distribution, most abundant in pancreatic alpha- and beta-cells, less in brain and intestine.

The protein localises to the cytoplasm. It is found in the nucleus. Its function is as follows. Acts as a transcriptional activator: mediates transcriptional activation by binding to E box-containing promoter consensus core sequences 5'-CANNTG-3'. Associates with the p300/CBP transcription coactivator complex to stimulate transcription of the secretin gene as well as the gene encoding the cyclin-dependent kinase inhibitor CDKN1A. Contributes to the regulation of several cell differentiation pathways, like those that promote the formation of early retinal ganglion cells, inner ear sensory neurons, granule cells forming either the cerebellum or the dentate gyrus cell layer of the hippocampus, endocrine islet cells of the pancreas and enteroendocrine cells of the small intestine. Together with PAX6 or SIX3, is required for the regulation of amacrine cell fate specification. Also required for dendrite morphogenesis and maintenance in the cerebellar cortex. Associates with chromatin to enhancer regulatory elements in genes encoding key transcriptional regulators of neurogenesis. The polypeptide is Neurogenic differentiation factor 1 (NEUROD1) (Mesocricetus auratus (Golden hamster)).